Reading from the N-terminus, the 78-residue chain is Apolipoprotein C-I (78 aa).

The N-terminal stretch at 1–26 (MRLILCLPVLVVVLLMVLEGPAPAQG) is a signal peptide.

The protein belongs to the apolipoprotein C1 family.

The protein resides in the secreted. Functionally, inhibitor of lipoprotein binding to the low density lipoprotein (LDL) receptor, LDL receptor-related protein, and very low density lipoprotein (VLDL) receptor. Associates with high density lipoproteins (HDL) and the triacylglycerol-rich lipoproteins in the plasma and makes up about 10% of the protein of the VLDL and 2% of that of HDL. Appears to interfere directly with fatty acid uptake and is also the major plasma inhibitor of cholesteryl ester transfer protein (CETP). Binds free fatty acids and reduces their intracellular esterification. Modulates the interaction of APOE with beta-migrating VLDL and inhibits binding of beta-VLDL to the LDL receptor-related protein. The polypeptide is Apolipoprotein C-I (APOC1) (Acinonyx jubatus (Cheetah)).